A 111-amino-acid chain; its full sequence is Large ribosomal subunit protein P1 (111 aa).

The segment covering 65-89 has biased composition (low complexity); the sequence is SGAGSGPAPAAAAAAPAAGGAAPAA. The disordered stretch occupies residues 65–111; sequence SGAGSGPAPAAAAAAPAAGGAAPAAETKKKEEPKEESDDDMGFGLFD.

This sequence belongs to the eukaryotic ribosomal protein P1/P2 family. In terms of assembly, P1 and P2 exist as dimers at the large ribosomal subunit.

Functionally, plays an important role in the elongation step of protein synthesis. In Caenorhabditis elegans, this protein is Large ribosomal subunit protein P1.